A 677-amino-acid chain; its full sequence is DNA ligase (677 aa).

Residues 38 to 42 (DYDFD), 87 to 88 (SL), and Glu121 each bind NAD(+). The active-site N6-AMP-lysine intermediate is the Lys123. Arg144, Glu187, Lys300, and Lys324 together coordinate NAD(+). Zn(2+)-binding residues include Cys418, Cys421, Cys436, and Cys442. The 77-residue stretch at 601-677 (LINSNFEGLS…ISEEEFEAML (77 aa)) folds into the BRCT domain.

The protein belongs to the NAD-dependent DNA ligase family. LigA subfamily. The cofactor is Mg(2+). Mn(2+) is required as a cofactor.

It carries out the reaction NAD(+) + (deoxyribonucleotide)n-3'-hydroxyl + 5'-phospho-(deoxyribonucleotide)m = (deoxyribonucleotide)n+m + AMP + beta-nicotinamide D-nucleotide.. DNA ligase that catalyzes the formation of phosphodiester linkages between 5'-phosphoryl and 3'-hydroxyl groups in double-stranded DNA using NAD as a coenzyme and as the energy source for the reaction. It is essential for DNA replication and repair of damaged DNA. This Chlorobium luteolum (strain DSM 273 / BCRC 81028 / 2530) (Pelodictyon luteolum) protein is DNA ligase.